The sequence spans 594 residues: Golgi-associated RAB2 interactor protein 4 (594 aa).

The disordered stretch occupies residues 387-524 (MDAAAGPPVS…TSSGSSKGLG (138 aa)). Residues 396–406 (STRQSKSSLSG) are compositionally biased toward polar residues. 3 stretches are compositionally biased toward basic and acidic residues: residues 408 to 433 (HGRE…DRAL), 442 to 455 (TGES…DKIA), and 468 to 477 (ANRDDKKEKG). Over residues 511-520 (SLWTTSSGSS) the composition is skewed to polar residues.

The protein belongs to the GARIN family. In terms of assembly, interacts (via N-terminus) with RAB2B (in GTP-bound form).

Its subcellular location is the golgi apparatus. Its function is as follows. RAB2B effector protein required for the compacted Golgi morphology, probably through interaction with small GTPase RAB2B. The chain is Golgi-associated RAB2 interactor protein 4 from Homo sapiens (Human).